The following is a 465-amino-acid chain: 2-methylcitrate synthase, mitochondrial (465 aa).

Positions 72 and 190 each coordinate CoA. His265 serves as a coordination point for oxaloacetate. Position 300 (Leu300) interacts with CoA. The active site involves His301. CoA is bound by residues Val342, Gly344, and Tyr345. The oxaloacetate site is built by His347 and Arg356. The active site involves His347. 3 residues coordinate CoA: Thr394, Lys395, and Asn400. Asp402 is a catalytic residue. 2 residues coordinate oxaloacetate: Arg428 and Arg448.

Belongs to the citrate synthase family. As to quaternary structure, homodimer.

The protein resides in the mitochondrion matrix. It catalyses the reaction propanoyl-CoA + oxaloacetate + H2O = (2S,3S)-2-methylcitrate + CoA + H(+). The enzyme catalyses oxaloacetate + acetyl-CoA + H2O = citrate + CoA + H(+). The protein operates within organic acid metabolism; propanoate degradation. Activity is inhibited by p-chloromercuribenzoate (pCMB), monoiodoacetamide, H(2)O(2), ATP, ADP, NADH, NADPH, Hg(2+) and Zn(2+). Component of the methylcitrate cycle that catalyzes the synthesis of (2S,3S)-2-methylcitrate from propionyl-CoA and oxaloacetate. Plays an important role in detoxification of propionyl-CoA, an inhibitor of both primary and secondary metabolism. Also has citrate synthase activity using as substrates acetyl-CoA and oxaloacetate. The sequence is that of 2-methylcitrate synthase, mitochondrial from Yarrowia lipolytica (strain CLIB 122 / E 150) (Yeast).